We begin with the raw amino-acid sequence, 607 residues long: MELILNSLISDDLTEEQKRLSLDFLQDILQSNTKDYESYFSSRAVPGSITEDIAEIDAELSALDRKIRKTLLDNTSQIIGNILENDDRAQLDDIAKSLEQLWELDTNINKAADRNVTNDDINNESVSIDDFLEDDKEDNDTGRIMTTESNNLARKKKEDEFHKALSRLRNRISTKEDDKDDIRSDTLVTVLENLDSITDLMELPFLARTCIRTGHYQEAVMLYTHTTSLRSRFPGSTIVDEVCEKVLNEISTTMLSGLVKLLSTNVSVNSLKKILQYLNSIPPFDGKTNKSLLSVFLAMRYKFITDEIASYPLDVESSNESLIEMMVKRKIEVLREHVYMSLNVFLKSFLYDTNDLEIPFPEELESTVLRINGTNEEKEIEEKEKETKKEEYQKQDSVANNEEDVTENKSIEDVQEEVQGKVEGEDDGAERKTENEIENETVNKTEDKAEKEKEEEVNTKDNKAEKEEEEINKVEVTPEEPSKSIDNKAEKEEEEINKVEVTPEEPSKKIRTSKRENKIPTNAVMLQFVDKCITYVLKDLTRGLNSIKLSDSVCLQLVYCSFRLCDLNRNYHHLFLKKINDTSLFTTEQLARAIDKRAELASKYIYS.

Basic and acidic residues-rich tracts occupy residues 375-394 (NEEKEIEEKEKETKKEEYQK), 406-466 (TENK…KAEK), 480-491 (EPSKSIDNKAEK), and 505-514 (EPSKKIRTSK). The interval 375–514 (NEEKEIEEKE…EPSKKIRTSK (140 aa)) is disordered. At Ser-410 the chain carries Phosphoserine.

The protein belongs to the COG8 family. In terms of assembly, component of the conserved oligomeric Golgi (COG or Sec34/Sec35) complex which consists of eight different proteins COG1-COG8.

The protein localises to the golgi apparatus membrane. Acts as a component of the peripheral membrane COG complex that is involved in intra-Golgi protein trafficking. COG is located at the cis-Golgi, and regulates tethering of retrograde intra-Golgi vesicles and possibly a number of other membrane trafficking events. This is Conserved oligomeric Golgi complex subunit 8 (COG8) from Saccharomyces cerevisiae (strain ATCC 204508 / S288c) (Baker's yeast).